Here is a 586-residue protein sequence, read N- to C-terminus: Mitogen-activated protein kinase 15 (586 aa).

In terms of domain architecture, Protein kinase spans 14–305; that stretch reads YDIKKRLGKG…AEEALEHPYV (292 aa). Residues 20-28 and Lys43 contribute to the ATP site; that span reads LGKGAYGIV. Asp138 (proton acceptor) is an active-site residue. 2 disordered regions span residues 354-506 and 520-539; these read QKRE…DAPP and NQRTAPIQGRDPRSAPRFGR. Pro residues predominate over residues 382–393; that stretch reads PAPPAGTNPAPQ. Residues 400–414 show a composition bias toward low complexity; it reads PQRAAIAAPNQPPAQ. A compositionally biased stretch (polar residues) spans 415 to 439; sequence KDSTQQSPKIKAPSSNPITHSTTHG. Low complexity predominate over residues 452–463; the sequence is AGQQGAAGTTAQ. The segment covering 464 to 473 has biased composition (basic and acidic residues); sequence EVRKEVESRS. A compositionally biased stretch (polar residues) spans 484 to 498; the sequence is FSHSQQARAAATNSA.

As to quaternary structure, interacts with dvl2.

The protein resides in the cytoplasm. The protein localises to the cytoskeleton. Its subcellular location is the cilium basal body. It is found in the cell projection. It localises to the cilium. The protein resides in the cell junction. The enzyme catalyses L-seryl-[protein] + ATP = O-phospho-L-seryl-[protein] + ADP + H(+). It carries out the reaction L-threonyl-[protein] + ATP = O-phospho-L-threonyl-[protein] + ADP + H(+). Atypical MAPK protein that regulates ciliogenesis by phosphorylating rcsd1 through its binding with dvl2. This chain is Mitogen-activated protein kinase 15, found in Xenopus laevis (African clawed frog).